The sequence spans 438 residues: CBL-interacting protein kinase 32 (438 aa).

The 256-residue stretch at 13 to 268 (YELGRTIGEG…IPEILEDEWF (256 aa)) folds into the Protein kinase domain. Residues 19–27 (IGEGTFAKV) and Lys-42 contribute to the ATP site. The Proton acceptor role is filled by Asp-136. Residues 154–183 (DFGLSALSQQIKDDGLLHTTCGTPNYVAPE) form an activation loop region. One can recognise an NAF domain in the interval 305–329 (EEPEALNAFELISMSAGLNLGNLFD). The tract at residues 335–364 (KRETRFTSKCPPKEIVRKIEEAAKPLGFDV) is PPI.

It belongs to the protein kinase superfamily. CAMK Ser/Thr protein kinase family. SNF1 subfamily. Mn(2+) is required as a cofactor.

It carries out the reaction L-seryl-[protein] + ATP = O-phospho-L-seryl-[protein] + ADP + H(+). It catalyses the reaction L-threonyl-[protein] + ATP = O-phospho-L-threonyl-[protein] + ADP + H(+). CIPK serine-threonine protein kinases interact with CBL proteins. Binding of a CBL protein to the regulatory NAF domain of CIPK protein lead to the activation of the kinase in a calcium-dependent manner. This is CBL-interacting protein kinase 32 (CIPK32) from Oryza sativa subsp. japonica (Rice).